Reading from the N-terminus, the 140-residue chain is Active regulator of SIRT1 (140 aa).

2 disordered regions span residues 1–52 (MSAS…KNKA) and 95–123 (QQVLTQNRGRKSKDRPAEKKEKKKPEGTV). Basic and acidic residues predominate over residues 108–120 (DRPAEKKEKKKPE).

The protein belongs to the AROS family. In terms of assembly, part of the small subunit (SSU) processome, composed of more than 70 proteins and the RNA chaperone small nucleolar RNA (snoRNA) U3.

Its subcellular location is the nucleus. It localises to the nucleolus. Functionally, part of the small subunit (SSU) processome, first precursor of the small eukaryotic ribosomal subunit. During the assembly of the SSU processome in the nucleolus, many ribosome biogenesis factors, an RNA chaperone and ribosomal proteins associate with the nascent pre-rRNA and work in concert to generate RNA folding, modifications, rearrangements and cleavage as well as targeted degradation of pre-ribosomal RNA by the RNA exosome. Acts as a chaperone that specifically mediates the integration of RPS19 in state post-A1. Direct regulator of SIRT1. This is Active regulator of SIRT1 (RPS19BP1) from Gallus gallus (Chicken).